The following is a 325-amino-acid chain: Tetraacyldisaccharide 4'-kinase (325 aa).

T55 to T62 contacts ATP.

Belongs to the LpxK family.

The enzyme catalyses a lipid A disaccharide + ATP = a lipid IVA + ADP + H(+). It participates in glycolipid biosynthesis; lipid IV(A) biosynthesis; lipid IV(A) from (3R)-3-hydroxytetradecanoyl-[acyl-carrier-protein] and UDP-N-acetyl-alpha-D-glucosamine: step 6/6. Functionally, transfers the gamma-phosphate of ATP to the 4'-position of a tetraacyldisaccharide 1-phosphate intermediate (termed DS-1-P) to form tetraacyldisaccharide 1,4'-bis-phosphate (lipid IVA). The protein is Tetraacyldisaccharide 4'-kinase of Salmonella paratyphi C (strain RKS4594).